Reading from the N-terminus, the 376-residue chain is Regulatory protein E2 (376 aa).

Positions 1–206 (METLANRLDV…HHAFDPVSST (206 aa)) are transactivation domain. The interval 211-271 (AAGPLCTGDT…TTERASQPLD (61 aa)) is disordered. 2 stretches are compositionally biased toward polar residues: residues 218 to 237 (GDTT…GPQQ) and 246 to 266 (NWEQ…TERA). The interval 294–376 (CAPVVHLKGD…VILGHMSMFV (83 aa)) is DNA-binding domain. Lys301 is covalently cross-linked (Glycyl lysine isopeptide (Lys-Gly) (interchain with G-Cter in SUMO)).

The protein belongs to the papillomaviridae E2 protein family. As to quaternary structure, binds DNA as homodimer. Interacts with protein E1; this interaction greatly increases E1 DNA-binding activity. Interacts with protein L1; this interaction enhances E2-dependent replication and transcription activation. Interacts with protein L2; this interaction inhibits E2 transcriptional activity but not DNA replication function E2. Interacts with protein E7; this interaction inhibits E7 oncogenic activity. Interacts with host TAF1; this interaction modulates E2-dependent transcriptional regulation. Interacts with host BRD4; this interaction mediates E2 transcriptional activation function. Additionally, the interaction with host BRD4 on mitotic chromosomes mediates tethering of the viral genome. Interacts with host TOPBP1; this interaction is required for optimal viral DNA replication. Post-translationally, phosphorylated. Sumoylation plays a regulatory role in E2 transcriptional activity.

It localises to the host nucleus. Functionally, plays a role in the initiation of viral DNA replication. A dimer of E2 interacts with a dimer of E1 in order to improve specificity of E1 DNA binding activity. Once the complex recognizes and binds DNA at specific sites, the E2 dimer is removed from DNA. E2 also regulates viral transcription through binding to the E2RE response element (5'-ACCNNNNNNGGT-3') present in multiple copies in the regulatory regions of the viral genome. Activates or represses transcription depending on E2RE's position with regards to proximal promoter elements including the TATA-box. Repression occurs by sterically hindering the assembly of the transcription initiation complex. This is Regulatory protein E2 from Homo sapiens (Human).